The sequence spans 200 residues: MITVILIFSAYLLGSISFAVVASWLFKLPDPRSYGSGNPGATNVLRTGKKVAAAVTLLGDAGKGWVAVVVAKYLGNVLGLGDEVIASAALAVFLGHLFPIFLAFKGGKGVATSAGILLGLNLWLGILAILTWIIVALVSRISSLSALLSALLAPLYTYFLLQKEMLTITVLIISILLILKHQSNIANLIAGKETRIGKSS.

5 helical membrane-spanning segments follow: residues 1-21 (MITV…FAVV), 51-71 (VAAA…VVVA), 84-104 (VIAS…FLAF), 116-136 (ILLG…IIVA), and 159-179 (FLLQ…LLIL).

It belongs to the PlsY family. Probably interacts with PlsX.

It is found in the cell inner membrane. It carries out the reaction an acyl phosphate + sn-glycerol 3-phosphate = a 1-acyl-sn-glycero-3-phosphate + phosphate. It functions in the pathway lipid metabolism; phospholipid metabolism. Catalyzes the transfer of an acyl group from acyl-phosphate (acyl-PO(4)) to glycerol-3-phosphate (G3P) to form lysophosphatidic acid (LPA). This enzyme utilizes acyl-phosphate as fatty acyl donor, but not acyl-CoA or acyl-ACP. This is Glycerol-3-phosphate acyltransferase from Nitrosomonas eutropha (strain DSM 101675 / C91 / Nm57).